The following is a 176-amino-acid chain: Nucleoside triphosphate/diphosphate phosphatase (176 aa).

Catalysis depends on Arg23, which acts as the Proton donor. Residues Asn87, Asp103, Asp105, Asp107, Asp120, and Glu123 each coordinate Mg(2+).

This sequence belongs to the Ntdp family. Mg(2+) is required as a cofactor.

It catalyses the reaction a ribonucleoside 5'-triphosphate + H2O = a ribonucleoside 5'-diphosphate + phosphate + H(+). The enzyme catalyses a ribonucleoside 5'-diphosphate + H2O = a ribonucleoside 5'-phosphate + phosphate + H(+). Functionally, has nucleoside phosphatase activity towards nucleoside triphosphates and nucleoside diphosphates. The chain is Nucleoside triphosphate/diphosphate phosphatase from Bacillus cereus (strain B4264).